Consider the following 112-residue polypeptide: UPF0342 protein SUB0718 (112 aa).

This sequence belongs to the UPF0342 family.

The chain is UPF0342 protein SUB0718 from Streptococcus uberis (strain ATCC BAA-854 / 0140J).